We begin with the raw amino-acid sequence, 261 residues long: MNPNCARCGKIVYPTEKVNCLDKFWHKACFHCETCKMTLNMKNYKGYEKKPYCNAHYPKQSFTMVADTPENLRLKQQSELQSQVRYKEEFEKNKGKGFSVVADTPELQRIKKTQDQISNIKYHEEFEKSRMGPSGGEGMEPERRDSQDGSSYRRPLEQQQPHHIPTSAPVYQQPQQQPVAQSYGGYKEPAAPVSIQRSAPGGGGKRYRAVYDYSAADEDEVSFQDGDTIVNVQQIDDGWMYGTVERTGDTGMLPANYVEAI.

Position 1 is an N-acetylmethionine (M1). Positions 5–56 constitute an LIM zinc-binding domain; it reads CARCGKIVYPTEKVNCLDKFWHKACFHCETCKMTLNMKNYKGYEKKPYCNAH. K42 bears the N6-acetyllysine mark. Nebulin repeat units follow at residues 61–95 and 97–131; these read SFTM…KNKG and GFSV…KSRM. T68 carries the post-translational modification Phosphothreonine. N6-methyllysine is present on K75. S99 carries the phosphoserine modification. T104 carries the post-translational modification Phosphothreonine. Residues 111–186 are disordered; the sequence is KKTQDQISNI…QPVAQSYGGY (76 aa). The residue at position 112 (K112) is an N6-succinyllysine. S118 bears the Phosphoserine mark. Over residues 121 to 130 the composition is skewed to basic and acidic residues; the sequence is KYHEEFEKSR. S134 and S146 each carry phosphoserine. Residues 167–183 are compositionally biased toward low complexity; it reads SAPVYQQPQQQPVAQSY. The SH3 domain occupies 202 to 261; that stretch reads GGGKRYRAVYDYSAADEDEVSFQDGDTIVNVQQIDDGWMYGTVERTGDTGMLPANYVEAI.

As to quaternary structure, interacts with F-actin. Interacts with ANKRD54. Interacts with KBTBD10.

It localises to the cytoplasm. It is found in the cell cortex. The protein localises to the cytoskeleton. Its function is as follows. Plays an important role in the regulation of dynamic actin-based, cytoskeletal activities. Agonist-dependent changes in LASP1 phosphorylation may also serve to regulate actin-associated ion transport activities, not only in the parietal cell but also in certain other F-actin-rich secretory epithelial cell types. The chain is LIM and SH3 domain protein 1 (LASP1) from Homo sapiens (Human).